A 259-amino-acid polypeptide reads, in one-letter code: 5'-nucleotidase SurE (259 aa).

Residues D15, D16, S46, and N102 each contribute to the a divalent metal cation site.

The protein belongs to the SurE nucleotidase family. It depends on a divalent metal cation as a cofactor.

The protein resides in the cytoplasm. The enzyme catalyses a ribonucleoside 5'-phosphate + H2O = a ribonucleoside + phosphate. In terms of biological role, nucleotidase that shows phosphatase activity on nucleoside 5'-monophosphates. The chain is 5'-nucleotidase SurE from Chlorobium luteolum (strain DSM 273 / BCRC 81028 / 2530) (Pelodictyon luteolum).